Here is a 265-residue protein sequence, read N- to C-terminus: 14-3-3-like protein GF14 nu (265 aa).

Phosphoserine occurs at positions 67, 109, and 190. Thr211 is subject to Phosphothreonine. The segment at 242–265 (AGGDEIKEASKHEPEEGKPAETGQ) is disordered. Residues 245–265 (DEIKEASKHEPEEGKPAETGQ) show a composition bias toward basic and acidic residues.

Belongs to the 14-3-3 family. In terms of assembly, component of the SERK1 signaling complex, composed of KAPP, CDC48A, GRF6 or GRF7, SERK1, SERK2, SERK3/BAK1 and BRI1. Interacts with DREB1A and DREB1B in the nucleus. Interacts with CINV1.

It is found in the nucleus. It localises to the cytoplasm. Its function is as follows. Is associated with a DNA binding complex that binds to the G box, a well-characterized cis-acting DNA regulatory element found in plant genes. The protein is 14-3-3-like protein GF14 nu (GRF7) of Arabidopsis thaliana (Mouse-ear cress).